A 244-amino-acid chain; its full sequence is Electron transfer flavoprotein beta subunit lysine methyltransferase homolog (244 aa).

It belongs to the methyltransferase superfamily. ETFBKMT family.

Its function is as follows. Probable methyltransferase. In Caenorhabditis elegans, this protein is Electron transfer flavoprotein beta subunit lysine methyltransferase homolog.